We begin with the raw amino-acid sequence, 288 residues long: 4-diphosphocytidyl-2-C-methyl-D-erythritol kinase (288 aa).

Lysine 8 is a catalytic residue. 90-100 (PLEAGLAGGSA) contacts ATP. Aspartate 132 is an active-site residue.

This sequence belongs to the GHMP kinase family. IspE subfamily.

It catalyses the reaction 4-CDP-2-C-methyl-D-erythritol + ATP = 4-CDP-2-C-methyl-D-erythritol 2-phosphate + ADP + H(+). It participates in isoprenoid biosynthesis; isopentenyl diphosphate biosynthesis via DXP pathway; isopentenyl diphosphate from 1-deoxy-D-xylulose 5-phosphate: step 3/6. Its function is as follows. Catalyzes the phosphorylation of the position 2 hydroxy group of 4-diphosphocytidyl-2C-methyl-D-erythritol. The chain is 4-diphosphocytidyl-2-C-methyl-D-erythritol kinase from Carboxydothermus hydrogenoformans (strain ATCC BAA-161 / DSM 6008 / Z-2901).